Here is a 312-residue protein sequence, read N- to C-terminus: Expansin-A24 (312 aa).

The signal sequence occupies residues 1-27 (MELLKRKLYAKILMMVMVIWIAPMTNG). Residues 31–86 (ASHVPGGRPGAHPSHGAHPAHGAHPSHGAHPSHGAHPSHGAHPSHGALPSHGGQVP) are disordered. The span at 40-77 (GAHPSHGAHPAHGAHPSHGAHPSHGAHPSHGAHPSHGA) shows a compositional bias: low complexity. 6 consecutive repeat copies span residues 42 to 47 (HPSHGA), 48 to 53 (HPAHGA), 54 to 59 (HPSHGA), 60 to 65 (HPSHGA), 66 to 71 (HPSHGA), and 72 to 77 (HPSHGA). Residues 42 to 77 (HPSHGAHPAHGAHPSHGAHPSHGAHPSHGAHPSHGA) form a 6 X 6 AA tandem repeats of H-P-S-H-G-A region. One can recognise an Expansin-like EG45 domain in the interval 108–218 (QGACGYGDLH…RRVPCAKIGG (111 aa)). The Expansin-like CBD domain maps to 228-307 (HFLMILPYNV…DWKCNGQSFD (80 aa)).

Belongs to the expansin family. Expansin A subfamily.

The protein resides in the secreted. It localises to the cell wall. The protein localises to the membrane. Its function is as follows. Causes loosening and extension of plant cell walls by disrupting non-covalent bonding between cellulose microfibrils and matrix glucans. No enzymatic activity has been found. This Arabidopsis thaliana (Mouse-ear cress) protein is Expansin-A24 (EXPA24).